We begin with the raw amino-acid sequence, 142 residues long: MTNSFENSRRDLRERAFQALFNMEHGGDFLSASQFAYDYDKVSDQEHDIPAFLLTLVNGVVNHKDELDAIIKEHLKAGWSIERLTLTDRTMLRLGLYEIKFFEETPDRVALNEIIEIAKKYSDETSAKFINGLLSQFVSDSE.

It belongs to the NusB family.

Its function is as follows. Involved in transcription antitermination. Required for transcription of ribosomal RNA (rRNA) genes. Binds specifically to the boxA antiterminator sequence of the ribosomal RNA (rrn) operons. In Streptococcus uberis (strain ATCC BAA-854 / 0140J), this protein is Transcription antitermination protein NusB.